Consider the following 247-residue polypeptide: Probable transcriptional regulatory protein GSU1074 (247 aa).

This sequence belongs to the TACO1 family.

The protein localises to the cytoplasm. The sequence is that of Probable transcriptional regulatory protein GSU1074 from Geobacter sulfurreducens (strain ATCC 51573 / DSM 12127 / PCA).